The primary structure comprises 96 residues: Co-chaperonin GroES (96 aa).

This sequence belongs to the GroES chaperonin family. In terms of assembly, heptamer of 7 subunits arranged in a ring. Interacts with the chaperonin GroEL.

It localises to the cytoplasm. Its function is as follows. Together with the chaperonin GroEL, plays an essential role in assisting protein folding. The GroEL-GroES system forms a nano-cage that allows encapsulation of the non-native substrate proteins and provides a physical environment optimized to promote and accelerate protein folding. GroES binds to the apical surface of the GroEL ring, thereby capping the opening of the GroEL channel. The protein is Co-chaperonin GroES of Geotalea daltonii (strain DSM 22248 / JCM 15807 / FRC-32) (Geobacter daltonii).